Here is a 113-residue protein sequence, read N- to C-terminus: Hydrogenase maturation factor HypA (113 aa).

His-2 lines the Ni(2+) pocket. Positions 73, 76, 89, and 92 each coordinate Zn(2+).

It belongs to the HypA/HybF family.

Involved in the maturation of [NiFe] hydrogenases. Required for nickel insertion into the metal center of the hydrogenase. The sequence is that of Hydrogenase maturation factor HypA from Bradyrhizobium sp. (strain ORS 278).